Reading from the N-terminus, the 324-residue chain is Lactonase drp35 (324 aa).

The Ca(2+) site is built by Glu-47, Ser-109, Gly-111, Asp-129, Thr-132, Tyr-134, Asp-137, Asn-184, Asp-235, and Ser-236. The Proton donor role is filled by Asp-235.

It belongs to the SMP-30/CGR1 family. Ca(2+) serves as cofactor.

Its subcellular location is the cytoplasm. Functionally, exhibits lactonase activity. Acts in cells with perturbed membrane integrity and is possibly related to the membrane homeostasis. In Staphylococcus aureus (strain USA300), this protein is Lactonase drp35 (drp35).